The following is a 676-amino-acid chain: DNA-directed RNA polymerase subunit beta' (676 aa).

The Zn(2+) site is built by cysteine 69, cysteine 71, cysteine 87, and cysteine 90. Aspartate 489, aspartate 491, and aspartate 493 together coordinate Mg(2+).

Belongs to the RNA polymerase beta' chain family. RpoC1 subfamily. In terms of assembly, in plastids the minimal PEP RNA polymerase catalytic core is composed of four subunits: alpha, beta, beta', and beta''. When a (nuclear-encoded) sigma factor is associated with the core the holoenzyme is formed, which can initiate transcription. Mg(2+) is required as a cofactor. The cofactor is Zn(2+).

It localises to the plastid. It is found in the chloroplast. It catalyses the reaction RNA(n) + a ribonucleoside 5'-triphosphate = RNA(n+1) + diphosphate. In terms of biological role, DNA-dependent RNA polymerase catalyzes the transcription of DNA into RNA using the four ribonucleoside triphosphates as substrates. This is DNA-directed RNA polymerase subunit beta' from Lolium perenne (Perennial ryegrass).